A 344-amino-acid chain; its full sequence is Heat-inducible transcription repressor HrcA (344 aa).

It belongs to the HrcA family.

Functionally, negative regulator of class I heat shock genes (grpE-dnaK-dnaJ and groELS operons). Prevents heat-shock induction of these operons. The polypeptide is Heat-inducible transcription repressor HrcA (Streptococcus equi subsp. zooepidemicus (strain H70)).